The following is a 397-amino-acid chain: UDP-GlcNAc:betaGal beta-1,3-N-acetylglucosaminyltransferase 7 (397 aa).

Residues 1-6 lie on the Cytoplasmic side of the membrane; sequence MSLWKK. The helical; Signal-anchor for type II membrane protein transmembrane segment at 7 to 26 threads the bilayer; sequence TLYKSVCLALALLVAVTVFQ. Residues 27-397 are Lumenal-facing; it reads RSVTPGQFLQ…LTCSLKFQVL (371 aa). 4 N-linked (GlcNAc...) asparagine glycosylation sites follow: Asn-84, Asn-90, Asn-210, and Asn-387.

It belongs to the glycosyltransferase 31 family.

The protein resides in the golgi apparatus membrane. It functions in the pathway protein modification; protein glycosylation. Functionally, N-acetyl glucosamine (GlcNAc) transferase that catalyzes the transfer of GlcNAc via a beta1-&gt;3 linkage from UDP-GlcNAc to the non-reducing terminal galactose (Gal) in the linearly growing chain of N- and O-linked keratan sulfate proteoglycans. Cooperates with B4GALT4 galactosyltransferase and CHST6 and CHST1 sulfotransferases to construct and elongate mono- and disulfated disaccharide units [-&gt;3Galbeta1-&gt;4(6-sulfoGlcNAcbeta)1-&gt;] and [-&gt;3(6-sulfoGalbeta)1-&gt;4(6-sulfoGlcNAcbeta)1-&gt;] within keratan sulfate polymer. Involved in biosynthesis of N-linked keratan sulfate proteoglycans in cornea, with an impact on proteoglycan fibril organization and corneal transparency. May play a role in the maintenance of tissue architecture by suppressing cellular motility and invasion. The chain is UDP-GlcNAc:betaGal beta-1,3-N-acetylglucosaminyltransferase 7 (B3gnt7) from Rattus norvegicus (Rat).